Reading from the N-terminus, the 269-residue chain is Tryptophan synthase alpha chain (269 aa).

Catalysis depends on proton acceptor residues Glu-49 and Asp-60.

Belongs to the TrpA family. As to quaternary structure, tetramer of two alpha and two beta chains.

It carries out the reaction (1S,2R)-1-C-(indol-3-yl)glycerol 3-phosphate + L-serine = D-glyceraldehyde 3-phosphate + L-tryptophan + H2O. The protein operates within amino-acid biosynthesis; L-tryptophan biosynthesis; L-tryptophan from chorismate: step 5/5. The alpha subunit is responsible for the aldol cleavage of indoleglycerol phosphate to indole and glyceraldehyde 3-phosphate. The polypeptide is Tryptophan synthase alpha chain (Buchnera aphidicola subsp. Schlechtendalia chinensis).